A 339-amino-acid polypeptide reads, in one-letter code: UDP-N-acetylglucosamine--N-acetylmuramyl-(pentapeptide) pyrophosphoryl-undecaprenol N-acetylglucosamine transferase (339 aa).

UDP-N-acetyl-alpha-D-glucosamine is bound by residues 11–13, asparagine 127, arginine 170, serine 188, isoleucine 235, and glutamine 280; that span reads TGG.

Belongs to the glycosyltransferase 28 family. MurG subfamily.

It is found in the cell inner membrane. It carries out the reaction di-trans,octa-cis-undecaprenyl diphospho-N-acetyl-alpha-D-muramoyl-L-alanyl-D-glutamyl-meso-2,6-diaminopimeloyl-D-alanyl-D-alanine + UDP-N-acetyl-alpha-D-glucosamine = di-trans,octa-cis-undecaprenyl diphospho-[N-acetyl-alpha-D-glucosaminyl-(1-&gt;4)]-N-acetyl-alpha-D-muramoyl-L-alanyl-D-glutamyl-meso-2,6-diaminopimeloyl-D-alanyl-D-alanine + UDP + H(+). The protein operates within cell wall biogenesis; peptidoglycan biosynthesis. Its function is as follows. Cell wall formation. Catalyzes the transfer of a GlcNAc subunit on undecaprenyl-pyrophosphoryl-MurNAc-pentapeptide (lipid intermediate I) to form undecaprenyl-pyrophosphoryl-MurNAc-(pentapeptide)GlcNAc (lipid intermediate II). The protein is UDP-N-acetylglucosamine--N-acetylmuramyl-(pentapeptide) pyrophosphoryl-undecaprenol N-acetylglucosamine transferase of Thermotoga sp. (strain RQ2).